The following is a 260-amino-acid chain: Ribosomal RNA small subunit methyltransferase J (260 aa).

S-adenosyl-L-methionine is bound by residues 125–126 (ER) and aspartate 179. Positions 234-260 (IDGPKPSHALDGKSSRYDIYPKKALKP) are disordered. Basic and acidic residues predominate over residues 241 to 254 (HALDGKSSRYDIYP).

It belongs to the methyltransferase superfamily. RsmJ family.

It localises to the cytoplasm. It carries out the reaction guanosine(1516) in 16S rRNA + S-adenosyl-L-methionine = N(2)-methylguanosine(1516) in 16S rRNA + S-adenosyl-L-homocysteine + H(+). Its function is as follows. Specifically methylates the guanosine in position 1516 of 16S rRNA. The chain is Ribosomal RNA small subunit methyltransferase J from Pseudomonas fluorescens (strain SBW25).